A 105-amino-acid polypeptide reads, in one-letter code: MTMMITTGNSFDGKVIKQCLGIVRGIVVRSPTISQGLMGGLKSIVGGKIGAYSQMCEHAREEAFQLMIEHAQALNANGIIAMRYDTGEIGQAGTEVLCYGTAVII.

Belongs to the UPF0145 family.

This is UPF0145 protein lpp0255 from Legionella pneumophila (strain Paris).